The primary structure comprises 431 residues: Nuclear receptor subfamily 1 group I member 2 (431 aa).

2 consecutive NR C4-type zinc fingers follow at residues 38–58 and 74–99; these read CRVC…CEGC and CPFR…LRKC. The nuclear receptor DNA-binding region spans 38–104; that stretch reads CRVCGDKANG…RLRKCLESGM (67 aa). The short motif at 63–89 is the Bipartite nuclear localization signal element; sequence RRAMKRNVRLRCPFRKGTCEITRKTRR. Residues 105 to 142 are hinge; the sequence is KKEMIMSDAAVEQRRALIKRKKREKIEAPPPGGQGLTE. The region spanning 143-430 is the NR LBD domain; the sequence is EQQALIQELM…LMQELFSSTD (288 aa). Hyperforin is bound by residues Ser244 and 282 to 285; that span reads ILRF.

The protein belongs to the nuclear hormone receptor family. NR1 subfamily. As to quaternary structure, heterodimer with RXRA. Interacts with NCOA1. Interacts (via domain NR LBD) with CRY1 and CRY2 in a ligand-dependent manner.

The protein localises to the nucleus. Its function is as follows. Nuclear receptor that binds and is activated by a variety of endogenous and xenobiotic compounds. Transcription factor that activates the transcription of multiple genes involved in the metabolism and secretion of potentially harmful xenobiotics, endogenous compounds and drugs. Response to specific ligands is species-specific, due to differences in the ligand-binding domain. Activated by naturally occurring steroids, such as pregnenolone and progesterone. Binds to a response element in the promoters of the CYP3A4 and ABCB1/MDR1 genes. In Rattus norvegicus (Rat), this protein is Nuclear receptor subfamily 1 group I member 2 (Nr1i2).